A 156-amino-acid chain; its full sequence is Small ribosomal subunit protein uS7 (156 aa).

This sequence belongs to the universal ribosomal protein uS7 family. Part of the 30S ribosomal subunit. Contacts proteins S9 and S11.

Functionally, one of the primary rRNA binding proteins, it binds directly to 16S rRNA where it nucleates assembly of the head domain of the 30S subunit. Is located at the subunit interface close to the decoding center, probably blocks exit of the E-site tRNA. In Bordetella petrii (strain ATCC BAA-461 / DSM 12804 / CCUG 43448), this protein is Small ribosomal subunit protein uS7.